Here is a 452-residue protein sequence, read N- to C-terminus: Bifunctional protein GlmU (452 aa).

Residues 1–232 (MTGRSCLTIV…EDEVRGINTK (232 aa)) are pyrophosphorylase. UDP-N-acetyl-alpha-D-glucosamine is bound by residues 11-14 (LAAG), Lys25, Gln78, and 83-84 (GT). Residue Asp108 participates in Mg(2+) binding. The UDP-N-acetyl-alpha-D-glucosamine site is built by Gly144, Glu158, Asn173, and Asn230. Asn230 provides a ligand contact to Mg(2+). The tract at residues 233 to 253 (AQLAEAEQVMQARLRKEALDA) is linker. Residues 254–452 (GVTMVAPDTV…KLLAKKPKTG (199 aa)) form an N-acetyltransferase region. Residues Arg319 and Lys337 each contribute to the UDP-N-acetyl-alpha-D-glucosamine site. His349 functions as the Proton acceptor in the catalytic mechanism. Residues Tyr352 and Asn363 each coordinate UDP-N-acetyl-alpha-D-glucosamine. Acetyl-CoA contacts are provided by residues Ala366, 372–373 (NY), Ser391, Ser409, and Arg426.

In the N-terminal section; belongs to the N-acetylglucosamine-1-phosphate uridyltransferase family. It in the C-terminal section; belongs to the transferase hexapeptide repeat family. In terms of assembly, homotrimer. Mg(2+) is required as a cofactor.

Its subcellular location is the cytoplasm. It catalyses the reaction alpha-D-glucosamine 1-phosphate + acetyl-CoA = N-acetyl-alpha-D-glucosamine 1-phosphate + CoA + H(+). The enzyme catalyses N-acetyl-alpha-D-glucosamine 1-phosphate + UTP + H(+) = UDP-N-acetyl-alpha-D-glucosamine + diphosphate. It participates in nucleotide-sugar biosynthesis; UDP-N-acetyl-alpha-D-glucosamine biosynthesis; N-acetyl-alpha-D-glucosamine 1-phosphate from alpha-D-glucosamine 6-phosphate (route II): step 2/2. Its pathway is nucleotide-sugar biosynthesis; UDP-N-acetyl-alpha-D-glucosamine biosynthesis; UDP-N-acetyl-alpha-D-glucosamine from N-acetyl-alpha-D-glucosamine 1-phosphate: step 1/1. The protein operates within bacterial outer membrane biogenesis; LPS lipid A biosynthesis. In terms of biological role, catalyzes the last two sequential reactions in the de novo biosynthetic pathway for UDP-N-acetylglucosamine (UDP-GlcNAc). The C-terminal domain catalyzes the transfer of acetyl group from acetyl coenzyme A to glucosamine-1-phosphate (GlcN-1-P) to produce N-acetylglucosamine-1-phosphate (GlcNAc-1-P), which is converted into UDP-GlcNAc by the transfer of uridine 5-monophosphate (from uridine 5-triphosphate), a reaction catalyzed by the N-terminal domain. The protein is Bifunctional protein GlmU of Nitrobacter hamburgensis (strain DSM 10229 / NCIMB 13809 / X14).